The sequence spans 186 residues: MDPTLKQLARSLREAPVVDRDGYEYFVHGVTDGVPPLDPAVLEAIADGIRERIDLEGVDTLVAPEAMGIHHGTALSLATRIPLVVVRKRSYGFPEEVAVHQETSYGESDLYLNGVDAGDRVVVVDDVLSSGGTIEAVCEALEAVGAEIVDIVTVLRRVDADHGDISRPVTSLLDVRVRDGALEVVE.

It belongs to the purine/pyrimidine phosphoribosyltransferase family. Archaeal HPRT subfamily.

In terms of biological role, may catalyze a purine salvage reaction, the substrate is unknown. The chain is HGPRTase-like protein 3 from Haloterrigena turkmenica (strain ATCC 51198 / DSM 5511 / JCM 9101 / NCIMB 13204 / VKM B-1734 / 4k) (Halococcus turkmenicus).